A 90-amino-acid polypeptide reads, in one-letter code: Acylphosphatase (90 aa).

The 87-residue stretch at 4–90 folds into the Acylphosphatase-like domain; that stretch reads RWRFLIEGSV…TGNDWFDVRT (87 aa). Residues R19 and N37 contribute to the active site.

The protein belongs to the acylphosphatase family.

The enzyme catalyses an acyl phosphate + H2O = a carboxylate + phosphate + H(+). This is Acylphosphatase (acyP) from Synechococcus sp. (strain CC9311).